Consider the following 75-residue polypeptide: MPQLSRYSDEHVEQLLSDLLSVLEKHKAPTDLSLMVLGNMVTNLINTSVAPAQRQAIANSFTRALQSSISEDKAH.

The protein belongs to the UPF0352 family.

The chain is UPF0352 protein YejL from Salmonella arizonae (strain ATCC BAA-731 / CDC346-86 / RSK2980).